The following is an 879-amino-acid chain: Alanine--tRNA ligase (879 aa).

Zn(2+) contacts are provided by His566, His570, Cys668, and His672.

Belongs to the class-II aminoacyl-tRNA synthetase family. Requires Zn(2+) as cofactor.

Its subcellular location is the cytoplasm. The enzyme catalyses tRNA(Ala) + L-alanine + ATP = L-alanyl-tRNA(Ala) + AMP + diphosphate. Catalyzes the attachment of alanine to tRNA(Ala) in a two-step reaction: alanine is first activated by ATP to form Ala-AMP and then transferred to the acceptor end of tRNA(Ala). Also edits incorrectly charged Ser-tRNA(Ala) and Gly-tRNA(Ala) via its editing domain. The protein is Alanine--tRNA ligase of Clostridium botulinum (strain Alaska E43 / Type E3).